Consider the following 181-residue polypeptide: Interleukin-10 (181 aa).

A signal peptide spans 1 to 19 (MHGSALLCCCLVLLAGVGA). Intrachain disulfides connect Cys-31-Cys-129 and Cys-81-Cys-135. Asn-137 carries N-linked (GlcNAc...) asparagine glycosylation.

Belongs to the IL-10 family. As to quaternary structure, homodimer. Interacts with IL10RA and IL10RB.

Its subcellular location is the secreted. Its function is as follows. Major immune regulatory cytokine that acts on many cells of the immune system where it has profound anti-inflammatory functions, limiting excessive tissue disruption caused by inflammation. Mechanistically, IL10 binds to its heterotetrameric receptor comprising IL10RA and IL10RB leading to JAK1 and STAT2-mediated phosphorylation of STAT3. In turn, STAT3 translocates to the nucleus where it drives expression of anti-inflammatory mediators. Targets antigen-presenting cells (APCs) such as macrophages and monocytes and inhibits their release of pro-inflammatory cytokines including granulocyte-macrophage colony-stimulating factor /GM-CSF, granulocyte colony-stimulating factor/G-CSF, IL-1 alpha, IL-1 beta, IL-6, IL-8 and TNF-alpha. Also interferes with antigen presentation by reducing the expression of MHC-class II and co-stimulatory molecules, thereby inhibiting their ability to induce T cell activation. In addition, controls the inflammatory response of macrophages by reprogramming essential metabolic pathways including mTOR signaling. This is Interleukin-10 (IL10) from Canis lupus familiaris (Dog).